Reading from the N-terminus, the 504-residue chain is Putative arrestin-related trafficking adapter SPBC839.02 (504 aa).

Residues 481–504 (QAPPPKYDDIFQSGSSHDENHDDN) are disordered.

This sequence belongs to the ALY1 family.

Functionally, may regulate endocytosis in response to extracellular stimuli. The chain is Putative arrestin-related trafficking adapter SPBC839.02 from Schizosaccharomyces pombe (strain 972 / ATCC 24843) (Fission yeast).